The primary structure comprises 633 residues: Peptidoglycan D,D-transpeptidase MrdA (633 aa).

Residues 22–42 traverse the membrane as a helical segment; it reads LVAFLGILLLTGVLIANLYNL. Ser-330 acts as the Acyl-ester intermediate in catalysis.

This sequence belongs to the transpeptidase family. MrdA subfamily.

The protein localises to the cell inner membrane. The catalysed reaction is Preferential cleavage: (Ac)2-L-Lys-D-Ala-|-D-Ala. Also transpeptidation of peptidyl-alanyl moieties that are N-acyl substituents of D-alanine.. The protein operates within cell wall biogenesis; peptidoglycan biosynthesis. Catalyzes cross-linking of the peptidoglycan cell wall. The protein is Peptidoglycan D,D-transpeptidase MrdA of Escherichia coli O157:H7.